Reading from the N-terminus, the 122-residue chain is uncharacterized protein (122 aa).

It is found in the plastid. This is an uncharacterized protein from Euglena longa (Euglenophycean alga).